The primary structure comprises 338 residues: Phenylalanine--tRNA ligase alpha subunit (338 aa).

Residue Glu253 participates in Mg(2+) binding.

This sequence belongs to the class-II aminoacyl-tRNA synthetase family. Phe-tRNA synthetase alpha subunit type 1 subfamily. Tetramer of two alpha and two beta subunits. Mg(2+) is required as a cofactor.

It is found in the cytoplasm. It carries out the reaction tRNA(Phe) + L-phenylalanine + ATP = L-phenylalanyl-tRNA(Phe) + AMP + diphosphate + H(+). The chain is Phenylalanine--tRNA ligase alpha subunit from Legionella pneumophila (strain Lens).